We begin with the raw amino-acid sequence, 62 residues long: Potassium channel toxin kappa-KTx 3.3 (62 aa).

The N-terminal stretch at 1-26 is a signal peptide; that stretch reads MKSTLMTASLLILVLLSIVDYASVYA. Residues 27–36 constitute a propeptide that is removed on maturation; sequence ELIDSEISME. Cystine bridges form between C43/C61 and C47/C57.

It belongs to the short scorpion toxin superfamily. Potassium channel inhibitor kappa-KTx family. Kappa-KTx 3 subfamily. In terms of tissue distribution, expressed by the venom gland.

Its subcellular location is the secreted. Functionally, potassium channel inhibitor (Kv). This chain is Potassium channel toxin kappa-KTx 3.3, found in Heterometrus petersii (Asian forest scorpion).